A 303-amino-acid chain; its full sequence is Sterol-4-alpha-carboxylate 3-dehydrogenase ERG26, decarboxylating (303 aa).

Residues S8–L9 and T30–S32 each bind NADP(+). S71 serves as a coordination point for substrate. Residues P77 to P96 form a disordered region. Residues Y102, K106, and I128–I131 contribute to the NADP(+) site. Residue Y102 coordinates substrate. Residue K106 is the Proton donor of the active site.

The protein belongs to the 3-beta-HSD family. In terms of assembly, heterotetramer of ERG25, ERG26, ERG27 and ERG28. ERG28 acts as a scaffold to tether ERG27 and other 4,4-demethylation-related enzymes, forming a demethylation enzyme complex, in the endoplasmic reticulum.

It is found in the endoplasmic reticulum membrane. It functions in the pathway steroid metabolism; ergosterol biosynthesis. Its function is as follows. Sterol-4-alpha-carboxylate 3-dehydrogenase; part of the third module of ergosterol biosynthesis pathway that includes the late steps of the pathway. ERG26 is a catalytic component of the C-4 demethylation complex that catalyzes the conversion of 4,4-dimethylfecosterol into fecosterol via 4-methylfecosterol. The third module or late pathway involves the ergosterol synthesis itself through consecutive reactions that mainly occur in the endoplasmic reticulum (ER) membrane. Firstly, the squalene synthase ERG9 catalyzes the condensation of 2 farnesyl pyrophosphate moieties to form squalene, which is the precursor of all steroids. Squalene synthase is crucial for balancing the incorporation of farnesyl diphosphate (FPP) into sterol and nonsterol isoprene synthesis. Secondly, squalene is converted into lanosterol by the consecutive action of the squalene epoxidase ERG1 and the lanosterol synthase ERG7. Then, the delta(24)-sterol C-methyltransferase ERG6 methylates lanosterol at C-24 to produce eburicol. Eburicol is the substrate of the sterol 14-alpha demethylase encoded by CYP51A, CYP51B and CYP51C, to yield 4,4,24-trimethyl ergosta-8,14,24(28)-trienol. CYP51B encodes the enzyme primarily responsible for sterol 14-alpha-demethylation, and plays an essential role in ascospore formation. CYP51A encodes an additional sterol 14-alpha-demethylase, induced on ergosterol depletion and responsible for the intrinsic variation in azole sensitivity. The third CYP51 isoform, CYP51C, does not encode a sterol 14-alpha-demethylase, but is required for full virulence on host wheat ears. The C-14 reductase ERG24 then reduces the C14=C15 double bond which leads to 4,4-dimethylfecosterol. A sequence of further demethylations at C-4, involving the C-4 demethylation complex containing the C-4 methylsterol oxidases ERG25, the sterol-4-alpha-carboxylate 3-dehydrogenase ERG26 and the 3-keto-steroid reductase ERG27, leads to the production of fecosterol via 4-methylfecosterol. ERG28 has a role as a scaffold to help anchor ERG25, ERG26 and ERG27 to the endoplasmic reticulum. The C-8 sterol isomerase ERG2 then catalyzes the reaction which results in unsaturation at C-7 in the B ring of sterols and thus converts fecosterol to episterol. The sterol-C5-desaturases ERG3A and ERG3BB then catalyze the introduction of a C-5 double bond in the B ring to produce 5-dehydroepisterol. The C-22 sterol desaturases ERG5A and ERG5B further convert 5-dehydroepisterol into ergosta-5,7,22,24(28)-tetraen-3beta-ol by forming the C-22(23) double bond in the sterol side chain. Finally, ergosta-5,7,22,24(28)-tetraen-3beta-ol is substrate of the C-24(28) sterol reductase ERG4 to produce ergosterol. The polypeptide is Sterol-4-alpha-carboxylate 3-dehydrogenase ERG26, decarboxylating (Gibberella zeae (strain ATCC MYA-4620 / CBS 123657 / FGSC 9075 / NRRL 31084 / PH-1) (Wheat head blight fungus)).